The sequence spans 270 residues: Putative phosphoenolpyruvate synthase regulatory protein (270 aa).

150 to 157 contacts ADP; it reads GVSRCGKT.

Belongs to the pyruvate, phosphate/water dikinase regulatory protein family. PSRP subfamily.

It catalyses the reaction [pyruvate, water dikinase] + ADP = [pyruvate, water dikinase]-phosphate + AMP + H(+). It carries out the reaction [pyruvate, water dikinase]-phosphate + phosphate + H(+) = [pyruvate, water dikinase] + diphosphate. Its function is as follows. Bifunctional serine/threonine kinase and phosphorylase involved in the regulation of the phosphoenolpyruvate synthase (PEPS) by catalyzing its phosphorylation/dephosphorylation. This Shewanella amazonensis (strain ATCC BAA-1098 / SB2B) protein is Putative phosphoenolpyruvate synthase regulatory protein.